A 600-amino-acid polypeptide reads, in one-letter code: UPF0588 membrane protein C20F10.02c (600 aa).

2 helical membrane passes run 409–429 (LSAT…TSLV) and 437–457 (YHWL…SVLI).

This sequence belongs to the UPF0588 family.

It is found in the membrane. The chain is UPF0588 membrane protein C20F10.02c from Schizosaccharomyces pombe (strain 972 / ATCC 24843) (Fission yeast).